Here is a 2170-residue protein sequence, read N- to C-terminus: Brefeldin A-inhibited guanine nucleotide-exchange protein 3 (2170 aa).

Ser471 is subject to Phosphoserine. Disordered stretches follow at residues 489 to 547 (EHTP…MGKV) and 613 to 634 (AAEK…CSLA). Residues 503 to 524 (ISISVTTDTGQTTLEGELGQTT) show a composition bias toward polar residues. The region spanning 579-792 (RTRSYGSRYS…EELYHQVLDR (214 aa)) is the SEC7 domain. A compositionally biased stretch (basic and acidic residues) spans 614-623 (AEKDSGRSDV). Phosphoserine occurs at positions 628, 632, and 1045. The helical transmembrane segment at 1488–1508 (PGFGIYAVVHLLLPVMSLWLL) threads the bilayer. Residues 1843–1872 (SSDSSQQCSSEDEDIFEETAQVSPPRGKEK) are disordered. Ser1881 is subject to Phosphoserine. The segment covering 1938–1955 (FQSESSTPSTGGFSGKNT) has biased composition (polar residues). Disordered regions lie at residues 1938 to 1997 (FQSE…RKKE) and 2024 to 2058 (KRRQ…PLLQ). The segment covering 1956–1966 (PSEDDRREHLS) has biased composition (basic and acidic residues). Phosphoserine is present on residues Ser1975 and Ser1984. Basic and acidic residues-rich tracts occupy residues 1986–1997 (KTEKKDPGRKKE) and 2036–2045 (KEVKVDKKGE). 5 positions are modified to phosphoserine: Ser2072, Ser2074, Ser2088, Ser2094, and Ser2096. The interval 2078-2097 (ELLRQEKRPRSGSTGSSLSV) is disordered. Residues 2088–2097 (SGSTGSSLSV) show a composition bias toward low complexity.

Interacts with PHB2. Expressed in pancreatic islet (insulin granules of islet alpha and beta cells) and brain (at protein level).

It is found in the cytoplasmic vesicle. It localises to the secretory vesicle. The protein resides in the secretory vesicle membrane. Functionally, participates in the regulation of systemic glucose homeostasis, where it negatively regulates insulin granule biogenesis in pancreatic islet beta cells. Also regulates glucagon granule production in pancreatic alpha cells. Inhibits nuclear translocation of the transcriptional coregulator PHB2 and may enhance estrogen receptor alpha (ESR1) transcriptional activity in breast cancer cells. The protein is Brefeldin A-inhibited guanine nucleotide-exchange protein 3 of Mus musculus (Mouse).